A 99-amino-acid polypeptide reads, in one-letter code: UPF0235 protein Sbal223_1335 (99 aa).

It belongs to the UPF0235 family.

The protein is UPF0235 protein Sbal223_1335 of Shewanella baltica (strain OS223).